We begin with the raw amino-acid sequence, 254 residues long: Tumor necrosis factor ligand superfamily member 9 (254 aa).

The Cytoplasmic segment spans residues 1–28 (MEYASDASLDPEAPWPPAPRARACRVLP). The helical; Signal-anchor for type II membrane protein transmembrane segment at 29–49 (WALVAGLLLLLLLAAACAVFL) threads the bilayer. Residues 50–254 (ACPWAVSGAR…PAGLPSPRSE (205 aa)) lie on the Extracellular side of the membrane. In terms of domain architecture, THD spans 91 to 240 (MFAQLVAQNV…GATVLGLFRV (150 aa)).

Belongs to the tumor necrosis factor family. In terms of assembly, homotrimer. In terms of tissue distribution, expressed in brain, placenta, lung, skeletal muscle and kidney.

Its subcellular location is the membrane. Functionally, cytokine that binds to TNFRSF9. Induces the proliferation of activated peripheral blood T-cells. May have a role in activation-induced cell death (AICD). May play a role in cognate interactions between T-cells and B-cells/macrophages. The sequence is that of Tumor necrosis factor ligand superfamily member 9 (TNFSF9) from Homo sapiens (Human).